A 409-amino-acid polypeptide reads, in one-letter code: MAGVCDMAPNFLSPSEDQALGLALGREVALNCTAWVFSRPQCPQPSVQWLKDGLALGNGSHFSLHEDFWVSANFSEIVSSVLVLNLTNAEDYGTFTCSVWNVSSHSFTLWRAGPAGHVAAVLASLLVLVVLLLVALLYVKCRLNMLLWYQDTYGEVEMNDGKLYDAYVSYSDCPEDRKFVNFILKPQLERRRGYKLFLEDRDLLPRAEPSADLLVNLSRCRRLIVVLSDAFLSRPWCSQSFREGLCRLLELTRRPIFITFEGQRREPIHPALRLLRQHRHLVTLVLWKPGSVTPSSDFWKELQLALPRKVQYRPVEGDPQTRLQDDKDPMLIVRGRAAQGRGMESELDPDPEGDLGVRGPVFGEPPTPLQETRICIGESHGSEMDVSDLGSRNYSARTDFYCLVSEDDV.

At Met-1 to His-117 the chain is on the extracellular side. An Ig-like C2-type domain is found at Pro-9–Thr-108. 5 N-linked (GlcNAc...) asparagine glycosylation sites follow: Asn-31, Asn-58, Asn-73, Asn-85, and Asn-101. Cys-32 and Cys-97 are oxidised to a cystine. The helical; Signal-anchor for type III membrane protein transmembrane segment at Val-118–Tyr-138 threads the bilayer. Over Val-139–Val-409 the chain is Cytoplasmic. The TIR domain maps to Lys-162 to Leu-306. The residue at position 382 (Ser-382) is a Phosphoserine.

This sequence belongs to the interleukin-1 receptor family. As to quaternary structure, interacts with IL1R1, IRAK1, TLR4, TLR5, TLR9 and TRAF6. Upon IL-1 stimulation found in a complex at least composed of IL1R1, SIGIRR, MYD88, IRAK1 and TRAF6. Upon stimulation with LPC found in a complex at least composed of TLR4, SIG1IR, MYD88, IRAK1 and TRAF6. Interacts with PALM3. In terms of tissue distribution, expressed at high levels in kidney, and at moderate levels in colon, small intestine, lung, spleen and liver. Not expressed in brain and muscle. Expressed at high levels in epithelial cells, at moderate levels in splenocytes, and at low or undetectable levels in fibroblasts or endothelial cells. Expressed in mucosal and dendritic cells.

It localises to the membrane. Its function is as follows. Acts as a negative regulator of the Toll-like and IL-1R receptor signaling pathways. Attenuates the recruitment of receptor-proximal signaling components to the TLR4 receptor, probably through an TIR-TIR domain interaction with TLR4. Through its extracellular domain interferes with the heterodimerization of Il1R1 and IL1RAP. The polypeptide is Single Ig IL-1-related receptor (Sigirr) (Mus musculus (Mouse)).